A 424-amino-acid chain; its full sequence is MRVAMISMHTSPLQQPGVGDSGGMNVYILSTGTELARQGVEVDIFTRATRPSQGEVVQVAPNLRVINIVAGPYEGLAKEELSTQLAAFAGGVLEFTRRGGIEYDLIHSHYWLSGQVGWLMRDLWRIPLVHTAHTLAAVKNSYRADEDTPESEARRICEQQLVDNADVLAVNTQEELADLVHHYDADPDRISVVSPGADIALYTPGNDRATERSRRELGVPLHAKVVAFVGRLQPFKGPQVLIHAVAELLERDPQRNLRVLICGGPSGPSATPETYRNLAVELGVDKRIRFLDPRPPEELVAVYRAADIIAVPSYNESFGLVAMEAQATGTPVVAARVGGLPVAVAEGETGLLVDGHDPALWADTLATLLDDDETRIRMGQDAVEHARNFSWAATATQLSSLYSEATTAECDGGIPRRADGARWD.

His9 is a binding site for 1D-myo-inositol 3-phosphate. UDP-N-acetyl-alpha-D-glucosamine is bound by residues 15–16 (QP) and Gly23. 1D-myo-inositol 3-phosphate is bound by residues 20–25 (DSGGMN), Lys78, Tyr110, Thr134, and Arg154. The UDP-N-acetyl-alpha-D-glucosamine site is built by Arg231, Lys236, and Arg294. The Mg(2+) site is built by Tyr303, Arg304, and Ala306. UDP-N-acetyl-alpha-D-glucosamine-binding residues include Glu316 and Glu324. Residue Thr330 participates in Mg(2+) binding.

It belongs to the glycosyltransferase group 1 family. MshA subfamily. As to quaternary structure, homodimer.

The catalysed reaction is 1D-myo-inositol 3-phosphate + UDP-N-acetyl-alpha-D-glucosamine = 1D-myo-inositol 2-acetamido-2-deoxy-alpha-D-glucopyranoside 3-phosphate + UDP + H(+). Its function is as follows. Catalyzes the transfer of a N-acetyl-glucosamine moiety to 1D-myo-inositol 3-phosphate to produce 1D-myo-inositol 2-acetamido-2-deoxy-glucopyranoside 3-phosphate in the mycothiol biosynthesis pathway. The sequence is that of D-inositol 3-phosphate glycosyltransferase from Corynebacterium efficiens (strain DSM 44549 / YS-314 / AJ 12310 / JCM 11189 / NBRC 100395).